Reading from the N-terminus, the 318-residue chain is GTP cyclohydrolase MptA (318 aa).

The protein belongs to the GTP cyclohydrolase IV family. Homodimer. The cofactor is Fe(2+).

It carries out the reaction GTP + H2O = 7,8-dihydroneopterin 2',3'-cyclic phosphate + formate + diphosphate + H(+). It participates in cofactor biosynthesis; 5,6,7,8-tetrahydromethanopterin biosynthesis. In terms of biological role, converts GTP to 7,8-dihydro-D-neopterin 2',3'-cyclic phosphate, the first intermediate in the biosynthesis of coenzyme methanopterin. This chain is GTP cyclohydrolase MptA, found in Methanosarcina acetivorans (strain ATCC 35395 / DSM 2834 / JCM 12185 / C2A).